An 83-amino-acid chain; its full sequence is uncharacterized protein (83 aa).

This is an uncharacterized protein from Rhizobium meliloti (strain 1021) (Ensifer meliloti).